We begin with the raw amino-acid sequence, 177 residues long: Putative adenylate kinase (177 aa).

5 residues coordinate ATP: G10, G12, K13, T14, and T15. The interval 30–53 (DITEAVKKYKLYTEKDEDMDSYVI) is NMP. Positions 103 to 113 (KRGYKPKKVLE) are LID. Residue R104 participates in ATP binding.

This sequence belongs to the adenylate kinase family. AK6 subfamily. Interacts with uS11. Not a structural component of 40S pre-ribosomes, but transiently interacts with them by binding to uS11.

The enzyme catalyses AMP + ATP = 2 ADP. It catalyses the reaction ATP + H2O = ADP + phosphate + H(+). Functionally, broad-specificity nucleoside monophosphate (NMP) kinase that catalyzes the reversible transfer of the terminal phosphate group between nucleoside triphosphates and monophosphates. Also has ATPase activity. Involved in the late maturation steps of the 30S ribosomal particles, specifically 16S rRNA maturation. While NMP activity is not required for ribosome maturation, ATPase activity is. Associates transiently with small ribosomal subunit protein uS11. ATP hydrolysis breaks the interaction with uS11. May temporarily remove uS11 from the ribosome to enable a conformational change of the ribosomal RNA that is needed for the final maturation step of the small ribosomal subunit. The sequence is that of Putative adenylate kinase from Methanocaldococcus jannaschii (strain ATCC 43067 / DSM 2661 / JAL-1 / JCM 10045 / NBRC 100440) (Methanococcus jannaschii).